The following is a 260-amino-acid chain: Octanoyltransferase (260 aa).

One can recognise a BPL/LPL catalytic domain in the interval P42 to A241. Substrate-binding positions include R97–H104, A172–G174, and G185–A187. C203 functions as the Acyl-thioester intermediate in the catalytic mechanism.

The protein belongs to the LipB family.

It localises to the cytoplasm. The catalysed reaction is octanoyl-[ACP] + L-lysyl-[protein] = N(6)-octanoyl-L-lysyl-[protein] + holo-[ACP] + H(+). The protein operates within protein modification; protein lipoylation via endogenous pathway; protein N(6)-(lipoyl)lysine from octanoyl-[acyl-carrier-protein]: step 1/2. Its function is as follows. Catalyzes the transfer of endogenously produced octanoic acid from octanoyl-acyl-carrier-protein onto the lipoyl domains of lipoate-dependent enzymes. Lipoyl-ACP can also act as a substrate although octanoyl-ACP is likely to be the physiological substrate. The polypeptide is Octanoyltransferase (Synechococcus sp. (strain JA-3-3Ab) (Cyanobacteria bacterium Yellowstone A-Prime)).